We begin with the raw amino-acid sequence, 150 residues long: Guanine nucleotide-binding protein subunit gamma 2 (150 aa).

The span at 1–11 (MRGEANGEEEQ) shows a compositional bias: acidic residues. Positions 1 to 59 (MRGEANGEEEQQPPRRNHLRDDAEEEEEVERRAARPVSGQQQQQQRRRPTDVGGGAAMR) are disordered. The stretch at 65-97 (GKHRLSAAIARLDQELQSLQDELNELETMEPAS) forms a coiled coil. Positions 71-137 (AAIARLDQEL…RWFQRVRSSR (67 aa)) constitute a G protein gamma domain.

G proteins are composed of 3 units, alpha, beta and gamma. Interacts with the beta subunit RGB1.

It is found in the cell membrane. In terms of biological role, guanine nucleotide-binding proteins (G proteins) are involved as modulators or transducers in various transmembrane signaling systems. In Oryza sativa subsp. indica (Rice), this protein is Guanine nucleotide-binding protein subunit gamma 2.